A 522-amino-acid polypeptide reads, in one-letter code: Protein nucleotidyltransferase YdiU (522 aa).

ATP contacts are provided by G109, G111, R112, K132, D144, G145, R195, and R202. D271 serves as the catalytic Proton acceptor. The Mg(2+) site is built by N272 and D281. D281 provides a ligand contact to ATP.

It belongs to the SELO family. The cofactor is Mg(2+). Requires Mn(2+) as cofactor.

The enzyme catalyses L-seryl-[protein] + ATP = 3-O-(5'-adenylyl)-L-seryl-[protein] + diphosphate. The catalysed reaction is L-threonyl-[protein] + ATP = 3-O-(5'-adenylyl)-L-threonyl-[protein] + diphosphate. It carries out the reaction L-tyrosyl-[protein] + ATP = O-(5'-adenylyl)-L-tyrosyl-[protein] + diphosphate. It catalyses the reaction L-histidyl-[protein] + UTP = N(tele)-(5'-uridylyl)-L-histidyl-[protein] + diphosphate. The enzyme catalyses L-seryl-[protein] + UTP = O-(5'-uridylyl)-L-seryl-[protein] + diphosphate. The catalysed reaction is L-tyrosyl-[protein] + UTP = O-(5'-uridylyl)-L-tyrosyl-[protein] + diphosphate. Its function is as follows. Nucleotidyltransferase involved in the post-translational modification of proteins. It can catalyze the addition of adenosine monophosphate (AMP) or uridine monophosphate (UMP) to a protein, resulting in modifications known as AMPylation and UMPylation. The polypeptide is Protein nucleotidyltransferase YdiU (Burkholderia cenocepacia (strain HI2424)).